The chain runs to 141 residues: MMNTKKLLKMAKKWQQRAALRRKRISFHRSTDTTSSSTAAEKGCFVVYTSDRIRFAFPISYLSNSVIQELLKISEEEFGIPTEGPITLPFDSVFLEYLIRLVQRRMDGDTEKALITSISSTRCSLPCSFQLQEHSSTRLVF.

The protein belongs to the ARG7 family.

The protein localises to the cell membrane. Its function is as follows. May promote auxin-stimulated organ elongation, such as hypocotyls, stamen filaments and petals. The sequence is that of Auxin-responsive protein SAUR61 from Arabidopsis thaliana (Mouse-ear cress).